Here is a 192-residue protein sequence, read N- to C-terminus: dTTP/UTP pyrophosphatase (192 aa).

The active-site Proton acceptor is the aspartate 70.

Belongs to the Maf family. YhdE subfamily. It depends on a divalent metal cation as a cofactor.

The protein resides in the cytoplasm. The enzyme catalyses dTTP + H2O = dTMP + diphosphate + H(+). It carries out the reaction UTP + H2O = UMP + diphosphate + H(+). Nucleoside triphosphate pyrophosphatase that hydrolyzes dTTP and UTP. May have a dual role in cell division arrest and in preventing the incorporation of modified nucleotides into cellular nucleic acids. This Alkaliphilus metalliredigens (strain QYMF) protein is dTTP/UTP pyrophosphatase.